The primary structure comprises 405 residues: Saccharopepsin (405 aa).

Residues 1-22 (MFSLKALLPLALLLVSANQVAA) form the signal peptide. The propeptide at 23–76 (KVHKAKIYKHELSDEMKEVTFEQHLAHLGQKYLTQFEKANPEVVFSREHPFFTE) is activation peptide. The Peptidase A1 domain maps to 91–402 (YYTDITLGTP…DLGNNAVGLA (312 aa)). Aspartate 109 is a catalytic residue. A disulfide bridge connects residues cysteine 122 and cysteine 127. N-linked (GlcNAc...) asparagine glycosylation is present at asparagine 144. Aspartate 294 is a catalytic residue. A disulfide bridge links cysteine 328 with cysteine 361. N-linked (GlcNAc...) asparagine glycosylation is present at asparagine 345.

The protein belongs to the peptidase A1 family.

The protein localises to the vacuole. It catalyses the reaction Hydrolysis of proteins with broad specificity for peptide bonds. Cleaves -Leu-Leu-|-Val-Tyr- bond in a synthetic substrate. Does not act on esters of Tyr or Arg.. In terms of biological role, aspartyl protease implicated in the post-translational regulation of S.cerevisiae vacuolar proteinases. Acts on YSCB, on YSCY and on itself. This chain is Saccharopepsin (PEP4), found in Saccharomyces cerevisiae (strain ATCC 204508 / S288c) (Baker's yeast).